A 62-amino-acid chain; its full sequence is Photosystem II reaction center protein Z (62 aa).

The residue at position 1 (methionine 1) is an N-formylmethionine. Residues 1–4 lie on the Lumenal side of the membrane; the sequence is MTIL. The chain crosses the membrane as a helical span at residues 5–25; the sequence is FQLALAALVILSFVMVIGVPV. Residues 26-36 are Cytoplasmic-facing; it reads AYASPQDWDRS. Residues 37–58 form a helical membrane-spanning segment; sequence KQLIFLGSGLWIALVLVVGVLN. The Lumenal portion of the chain corresponds to 59–62; the sequence is FFVV.

Belongs to the PsbZ family. In terms of assembly, PSII is composed of 1 copy each of membrane proteins PsbA, PsbB, PsbC, PsbD, PsbE, PsbF, PsbH, PsbI, PsbJ, PsbK, PsbL, PsbM, PsbT, PsbX, PsbY, PsbZ, Psb30/Ycf12, peripheral proteins PsbO, CyanoQ (PsbQ), PsbU, PsbV and a large number of cofactors. It forms dimeric complexes. Part of a photosystem II (PSII) assembly intermediate complex PSII-I; crystallized from a strain deleted of psbJ, it forms monomeric PSII before addition of the oxygen evolving complex. PSII-I includes 3 assembly factors not found in mature PSII (Psb27, Psb28 and Psb34). The cofactor is PSII binds multiple chlorophylls, carotenoids and specific lipids..

Its subcellular location is the cellular thylakoid membrane. Functionally, may control the interaction of photosystem II (PSII) cores with the light-harvesting antenna, regulates electron flow through the 2 photosystem reaction centers. PSII is a light-driven water plastoquinone oxidoreductase, using light energy to abstract electrons from H(2)O, generating a proton gradient subsequently used for ATP formation. In terms of biological role, may also aid in binding of PsbK, Psb30/Ycf12 and the oxygen-evolving complex to PSII, at least in vitro. The polypeptide is Photosystem II reaction center protein Z (Thermosynechococcus vestitus (strain NIES-2133 / IAM M-273 / BP-1)).